A 357-amino-acid polypeptide reads, in one-letter code: UDP-N-acetylglucosamine--N-acetylmuramyl-(pentapeptide) pyrophosphoryl-undecaprenol N-acetylglucosamine transferase (357 aa).

UDP-N-acetyl-alpha-D-glucosamine-binding positions include 11–13, Asn-123, Arg-159, Ser-187, Ile-241, 260–265, and Gln-286; these read TGG and ALTVAE.

It belongs to the glycosyltransferase 28 family. MurG subfamily.

Its subcellular location is the cell inner membrane. The catalysed reaction is di-trans,octa-cis-undecaprenyl diphospho-N-acetyl-alpha-D-muramoyl-L-alanyl-D-glutamyl-meso-2,6-diaminopimeloyl-D-alanyl-D-alanine + UDP-N-acetyl-alpha-D-glucosamine = di-trans,octa-cis-undecaprenyl diphospho-[N-acetyl-alpha-D-glucosaminyl-(1-&gt;4)]-N-acetyl-alpha-D-muramoyl-L-alanyl-D-glutamyl-meso-2,6-diaminopimeloyl-D-alanyl-D-alanine + UDP + H(+). It functions in the pathway cell wall biogenesis; peptidoglycan biosynthesis. Its function is as follows. Cell wall formation. Catalyzes the transfer of a GlcNAc subunit on undecaprenyl-pyrophosphoryl-MurNAc-pentapeptide (lipid intermediate I) to form undecaprenyl-pyrophosphoryl-MurNAc-(pentapeptide)GlcNAc (lipid intermediate II). This is UDP-N-acetylglucosamine--N-acetylmuramyl-(pentapeptide) pyrophosphoryl-undecaprenol N-acetylglucosamine transferase from Aromatoleum aromaticum (strain DSM 19018 / LMG 30748 / EbN1) (Azoarcus sp. (strain EbN1)).